Here is a 289-residue protein sequence, read N- to C-terminus: Glucosamine-6-phosphate deaminase 1 (289 aa).

N6-acetyllysine is present on Lys-64. Asp-72 acts as the Proton acceptor; for enolization step in catalysis. Asp-141 (for ring-opening step) is an active-site residue. His-143 serves as the catalytic Proton acceptor; for ring-opening step. The active-site For ring-opening step is the Glu-148. A Phosphothreonine modification is found at Thr-161.

Belongs to the glucosamine/galactosamine-6-phosphate isomerase family. In terms of assembly, homohexamer. At the equatorial segment of the sperm head.

The protein resides in the cytoplasm. It carries out the reaction alpha-D-glucosamine 6-phosphate + H2O = beta-D-fructose 6-phosphate + NH4(+). It functions in the pathway nucleotide-sugar biosynthesis; UDP-N-acetyl-alpha-D-glucosamine biosynthesis; alpha-D-glucosamine 6-phosphate from D-fructose 6-phosphate: step 1/1. With respect to regulation, allosterically activated by N-acetylglucosamine-6-phosphate (GlcNAc6P). Catalyzes the reversible conversion of alpha-D-glucosamine 6-phosphate (GlcN-6P) into beta-D-fructose 6-phosphate (Fru-6P) and ammonium ion, a regulatory reaction step in de novo uridine diphosphate-N-acetyl-alpha-D-glucosamine (UDP-GlcNAc) biosynthesis via hexosamine pathway. Deamination is coupled to aldo-keto isomerization mediating the metabolic flux from UDP-GlcNAc toward Fru-6P. At high ammonium level can drive amination and isomerization of Fru-6P toward hexosamines and UDP-GlcNAc synthesis. Has a role in fine tuning the metabolic fluctuations of cytosolic UDP-GlcNAc and their effects on hyaluronan synthesis that occur during tissue remodeling. Seems to trigger calcium oscillations in mammalian eggs. These oscillations serve as the essential trigger for egg activation and early development of the embryo. This Mesocricetus auratus (Golden hamster) protein is Glucosamine-6-phosphate deaminase 1.